A 271-amino-acid polypeptide reads, in one-letter code: MLPTVFIVSDGTGITAETFAHSILSQFDQKFRLVRVPFVDSLDKAYATVEKINEAAVHDGRRAIVFTTLVDSESNDIVKRSNALVLDMFQRFVEPLEQELELKSSHAMGRGHQNADTEEYKTRIEAINFSLAHDDGQSNRNLSEADVILVGVSRSGKTPTSLYLAMQYGVKAANYPLIPEDFERGKLPSALAPYSEKLFGLSIDPQRLSEIRNERRPGSKYAAPENCRYEINEAEAMMRREGIKWLSSTHKSIEEIATTILQEIRLDRQSY.

An ADP-binding site is contributed by 151 to 158 (GVSRSGKT).

It belongs to the pyruvate, phosphate/water dikinase regulatory protein family. PSRP subfamily.

The catalysed reaction is [pyruvate, water dikinase] + ADP = [pyruvate, water dikinase]-phosphate + AMP + H(+). The enzyme catalyses [pyruvate, water dikinase]-phosphate + phosphate + H(+) = [pyruvate, water dikinase] + diphosphate. Functionally, bifunctional serine/threonine kinase and phosphorylase involved in the regulation of the phosphoenolpyruvate synthase (PEPS) by catalyzing its phosphorylation/dephosphorylation. In Burkholderia orbicola (strain MC0-3), this protein is Putative phosphoenolpyruvate synthase regulatory protein.